The following is a 244-amino-acid chain: Phosphoadenosine 5'-phosphosulfate reductase (244 aa).

The Nucleophile; cysteine thiosulfonate intermediate role is filled by Cys239.

Belongs to the PAPS reductase family. CysH subfamily.

It localises to the cytoplasm. The catalysed reaction is [thioredoxin]-disulfide + sulfite + adenosine 3',5'-bisphosphate + 2 H(+) = [thioredoxin]-dithiol + 3'-phosphoadenylyl sulfate. It functions in the pathway sulfur metabolism; hydrogen sulfide biosynthesis; sulfite from sulfate: step 3/3. Its function is as follows. Catalyzes the formation of sulfite from phosphoadenosine 5'-phosphosulfate (PAPS) using thioredoxin as an electron donor. The protein is Phosphoadenosine 5'-phosphosulfate reductase of Yersinia enterocolitica serotype O:8 / biotype 1B (strain NCTC 13174 / 8081).